A 148-amino-acid chain; its full sequence is Large ribosomal subunit protein bL9 (148 aa).

The protein belongs to the bacterial ribosomal protein bL9 family.

Binds to the 23S rRNA. The protein is Large ribosomal subunit protein bL9 of Salinispora arenicola (strain CNS-205).